Consider the following 186-residue polypeptide: ATP synthase subunit delta, cyanelle (186 aa).

The protein belongs to the ATPase delta chain family. As to quaternary structure, F-type ATPases have 2 components, F(1) - the catalytic core - and F(0) - the membrane proton channel. F(1) has five subunits: alpha(3), beta(3), gamma(1), delta(1), epsilon(1). CF(0) has four main subunits: a(1), b(1), b'(1) and c(10-14). The alpha and beta chains form an alternating ring which encloses part of the gamma chain. F(1) is attached to F(0) by a central stalk formed by the gamma and epsilon chains, while a peripheral stalk is formed by the delta, b and b' chains.

The protein resides in the plastid. The protein localises to the cyanelle thylakoid membrane. In terms of biological role, f(1)F(0) ATP synthase produces ATP from ADP in the presence of a proton or sodium gradient. F-type ATPases consist of two structural domains, F(1) containing the extramembraneous catalytic core and F(0) containing the membrane proton channel, linked together by a central stalk and a peripheral stalk. During catalysis, ATP synthesis in the catalytic domain of F(1) is coupled via a rotary mechanism of the central stalk subunits to proton translocation. Functionally, this protein is part of the stalk that links CF(0) to CF(1). It either transmits conformational changes from CF(0) to CF(1) or is implicated in proton conduction. In Cyanophora paradoxa, this protein is ATP synthase subunit delta, cyanelle.